The chain runs to 95 residues: Putative defensin-like protein 262 (95 aa).

Residues 1–26 (MEKTSLKLIFLFSLTVIAFCSSLGDA) form the signal peptide. Disulfide bonds link Cys48–Cys95, Cys64–Cys83, Cys70–Cys91, and Cys74–Cys93.

Belongs to the DEFL family.

The protein resides in the secreted. This is Putative defensin-like protein 262 from Arabidopsis thaliana (Mouse-ear cress).